Here is a 253-residue protein sequence, read N- to C-terminus: Isoprenyl transferase (253 aa).

Asp-30 is an active-site residue. Asp-30 provides a ligand contact to Mg(2+). Substrate contacts are provided by residues 31 to 34 (GNRR), Trp-35, His-51, and 79 to 81 (STE). Asn-82 serves as the catalytic Proton acceptor. Residues Phe-83, Arg-85, Arg-202, and 208-210 (RVS) each bind substrate. Position 221 (Glu-221) interacts with Mg(2+).

Belongs to the UPP synthase family. As to quaternary structure, homodimer. The cofactor is Mg(2+).

In terms of biological role, catalyzes the condensation of isopentenyl diphosphate (IPP) with allylic pyrophosphates generating different type of terpenoids. This chain is Isoprenyl transferase, found in Chlamydia trachomatis serovar D (strain ATCC VR-885 / DSM 19411 / UW-3/Cx).